Reading from the N-terminus, the 502-residue chain is Glucose-6-phosphate isomerase (502 aa).

Glu331 functions as the Proton donor in the catalytic mechanism. Active-site residues include His362 and Lys471.

The protein belongs to the GPI family.

The protein resides in the cytoplasm. It catalyses the reaction alpha-D-glucose 6-phosphate = beta-D-fructose 6-phosphate. The protein operates within carbohydrate biosynthesis; gluconeogenesis. It functions in the pathway carbohydrate degradation; glycolysis; D-glyceraldehyde 3-phosphate and glycerone phosphate from D-glucose: step 2/4. Functionally, catalyzes the reversible isomerization of glucose-6-phosphate to fructose-6-phosphate. This Xylella fastidiosa (strain M12) protein is Glucose-6-phosphate isomerase.